Reading from the N-terminus, the 57-residue chain is Large ribosomal subunit protein bL32 (57 aa).

The protein belongs to the bacterial ribosomal protein bL32 family.

The protein is Large ribosomal subunit protein bL32 of Staphylococcus aureus (strain MSSA476).